A 1891-amino-acid polypeptide reads, in one-letter code: TATA-binding protein-associated factor mot1 (1891 aa).

An HEAT 1 repeat occupies 30–68 (PDELFNLLGRILPYLRSKSWDTRAAAAKAIGLIVANADT). 3 disordered regions span residues 184 to 216 (FVASREHSIQGTSQPLASPIEPANGEESGLSKR), 241 to 283 (LSSR…LDRS), and 295 to 316 (FKGASVPENPLLQPESTEEGPN). Residues 264–275 (ENGEERNGDSKP) show a composition bias toward basic and acidic residues. HEAT repeat units follow at residues 473–511 (SKLMDGVLEAVMKGLGDYDDDVRAVSAATLVPIAEEFVK) and 569–606 (SSFGKLVPRLYPFLRHTITSVRSAVLRALMTFLQLEGE). A compositionally biased stretch (low complexity) spans 699-710 (SAAAPARSSPAS). Residues 699–740 (SAAAPARSSPASNTPEGTKGRRRKSEKKEAPPPSAHNVDGHM) form a disordered region. 4 HEAT repeats span residues 957-996 (PKKPSHIIKGMMDSIKKEENAELQQRSATAITSLVEYYTT), 1139-1177 (YPWVVDLLPLVVKALQCNLSVIRYAAAKCFATICSVITV), 1181-1216 (TMLVEKVLPMINDALDVHHRQGAVECIYHLIHVMED), and 1219-1257 (LPYVIFLVVPVLGRMSDSDNEVRLLATTSFATLVKLVPL). One can recognise a Helicase ATP-binding domain in the interval 1316–1489 (AFLNRYNLHG…WSLFDFLMPG (174 aa)). 1329–1336 (DDMGLGKT) is a binding site for ATP. The DEAH box motif lies at 1440–1443 (DEGH). An HEAT 8 repeat occupies 1526 to 1565 (EALHKQVLPFLLRRLKEEVLNDLPPKIIQNYYCDPSELQR). In terms of domain architecture, Helicase C-terminal spans 1663–1813 (DLSGASYVSP…STVVNQQNAG (151 aa)).

Belongs to the SNF2/RAD54 helicase family. As to quaternary structure, forms the NCT transcriptional regulatory complex with nctA and nctB.

It is found in the nucleus. Regulates transcription in association with TATA binding protein (TBP). Removes TBP from the TATA box via its C-terminal ATPase activity. Both transcription activation and repression require its ATPase activity. Part of the NCT transcriptional regulatory complex that acts as a key regulator of ergosterol biosynthesis and the azole exporter cdr1B. The NCT complex binds the promoters of genes linked to azole susceptibility, and especially represses the expression of cdr1B transporter. The polypeptide is TATA-binding protein-associated factor mot1 (Aspergillus fumigatus (strain ATCC MYA-4609 / CBS 101355 / FGSC A1100 / Af293) (Neosartorya fumigata)).